Here is a 405-residue protein sequence, read N- to C-terminus: MAVGLGPLPTLHPVAGFELGIASAGIKRPGRKDVVVMRCAEGSTVAGVFTLNAFCAAPVILAKKRVQNAVRYLLTNTGNANAGTGEPGLAAAERTTAKLAELTGVDASQILPYSTGVIGEPLPVEKIEGALQAALDDLSENNWEAAATGIMTTDTLPKGASRQFQHDGVTITVTGISKGAGMIRPNMATMLGYIATDAKVSRDVLQNLMLDGANKSFNRITIDGDTSTNDCCMLIATGKAALPEINRAEGELFAKLKQAVFEVCMDVAQAIVRDGEGATKFVTVEVNGGGNHQECLDVGYTVAHSPLIKTALFASDPNWGRILAAVGRAGVPDLDVSKIDVFLGEVCIASRGARAATYTEAQGSAVMQQEEITIRIELGRGDCSETIWTTDLSHEYVKINAEYRT.

Residues threonine 152, lysine 178, threonine 189, glutamate 276, asparagine 400, and threonine 405 each coordinate substrate. Threonine 189 (nucleophile) is an active-site residue.

The protein belongs to the ArgJ family. In terms of assembly, heterotetramer of two alpha and two beta chains.

It is found in the cytoplasm. The catalysed reaction is N(2)-acetyl-L-ornithine + L-glutamate = N-acetyl-L-glutamate + L-ornithine. It carries out the reaction L-glutamate + acetyl-CoA = N-acetyl-L-glutamate + CoA + H(+). Its pathway is amino-acid biosynthesis; L-arginine biosynthesis; L-ornithine and N-acetyl-L-glutamate from L-glutamate and N(2)-acetyl-L-ornithine (cyclic): step 1/1. It participates in amino-acid biosynthesis; L-arginine biosynthesis; N(2)-acetyl-L-ornithine from L-glutamate: step 1/4. In terms of biological role, catalyzes two activities which are involved in the cyclic version of arginine biosynthesis: the synthesis of N-acetylglutamate from glutamate and acetyl-CoA as the acetyl donor, and of ornithine by transacetylation between N(2)-acetylornithine and glutamate. The polypeptide is Arginine biosynthesis bifunctional protein ArgJ (Pseudomonas fluorescens (strain Pf0-1)).